The sequence spans 355 residues: 3-isopropylmalate dehydrogenase (355 aa).

77-90 is a binding site for NAD(+); the sequence is GAKWDNLPREKRPE. Substrate is bound by residues arginine 97, arginine 107, arginine 135, and aspartate 220. Mg(2+) is bound by residues aspartate 220, aspartate 244, and aspartate 248. 277–289 contributes to the NAD(+) binding site; it reads GSAPDIAGQGIAN.

Belongs to the isocitrate and isopropylmalate dehydrogenases family. LeuB type 1 subfamily. As to quaternary structure, homodimer. The cofactor is Mg(2+). Mn(2+) serves as cofactor.

It is found in the cytoplasm. The catalysed reaction is (2R,3S)-3-isopropylmalate + NAD(+) = 4-methyl-2-oxopentanoate + CO2 + NADH. Its pathway is amino-acid biosynthesis; L-leucine biosynthesis; L-leucine from 3-methyl-2-oxobutanoate: step 3/4. Catalyzes the oxidation of 3-carboxy-2-hydroxy-4-methylpentanoate (3-isopropylmalate) to 3-carboxy-4-methyl-2-oxopentanoate. The product decarboxylates to 4-methyl-2 oxopentanoate. This is 3-isopropylmalate dehydrogenase from Sulfurimonas denitrificans (strain ATCC 33889 / DSM 1251) (Thiomicrospira denitrificans (strain ATCC 33889 / DSM 1251)).